Reading from the N-terminus, the 676-residue chain is tRNA 5-methylaminomethyl-2-thiouridine biosynthesis bifunctional protein MnmC (676 aa).

Residues 1–241 (MFTVTPAKIY…KRECLCGIKN (241 aa)) are tRNA (mnm(5)s(2)U34)-methyltransferase. The interval 268–676 (IGGGIASLFT…RKLLKGTEIK (409 aa)) is FAD-dependent cmnm(5)s(2)U34 oxidoreductase.

The protein in the N-terminal section; belongs to the methyltransferase superfamily. tRNA (mnm(5)s(2)U34)-methyltransferase family. It in the C-terminal section; belongs to the DAO family. It depends on FAD as a cofactor.

The protein localises to the cytoplasm. The catalysed reaction is 5-aminomethyl-2-thiouridine(34) in tRNA + S-adenosyl-L-methionine = 5-methylaminomethyl-2-thiouridine(34) in tRNA + S-adenosyl-L-homocysteine + H(+). In terms of biological role, catalyzes the last two steps in the biosynthesis of 5-methylaminomethyl-2-thiouridine (mnm(5)s(2)U) at the wobble position (U34) in tRNA. Catalyzes the FAD-dependent demodification of cmnm(5)s(2)U34 to nm(5)s(2)U34, followed by the transfer of a methyl group from S-adenosyl-L-methionine to nm(5)s(2)U34, to form mnm(5)s(2)U34. This chain is tRNA 5-methylaminomethyl-2-thiouridine biosynthesis bifunctional protein MnmC, found in Histophilus somni (strain 129Pt) (Haemophilus somnus).